Consider the following 86-residue polypeptide: RNA-binding protein Hfq (86 aa).

Positions 9-69 (DRFLNILRTS…VSTIMPESFV (61 aa)) constitute a Sm domain.

This sequence belongs to the Hfq family. Homohexamer.

RNA chaperone that binds small regulatory RNA (sRNAs) and mRNAs to facilitate mRNA translational regulation in response to envelope stress, environmental stress and changes in metabolite concentrations. Also binds with high specificity to tRNAs. The sequence is that of RNA-binding protein Hfq from Thermosipho melanesiensis (strain DSM 12029 / CIP 104789 / BI429).